Consider the following 514-residue polypeptide: Cytochrome P450 94A1 (514 aa).

The helical transmembrane segment at 7 to 29 threads the bilayer; the sequence is EVLLPYLLPLLLLILPTTIFFLT. Residue Cys458 coordinates heme.

It belongs to the cytochrome P450 family. Requires heme as cofactor.

It is found in the endoplasmic reticulum membrane. Catalyzes the omega-hydroxylation of various fatty acids (FA) from 10 to 18 carbon atoms. The substrate specificity is higher for laurate &gt; palmitate &gt; myristate &gt; linolenate &gt; linoleate &gt; oleate &gt; caprate. May play a minor role in cutin synthesis and could be involved in plant defense. The chain is Cytochrome P450 94A1 (CYP94A1) from Vicia sativa (Spring vetch).